The primary structure comprises 209 residues: Dual specificity phosphatase 29 (209 aa).

The Tyrosine-protein phosphatase domain occupies 44–193; the sequence is NHVNEVWPNL…LRELDIQLAL (150 aa). A substrate-binding site is contributed by 137-144; it reads NCAMGRSR. The Phosphocysteine intermediate role is filled by Cys138.

This sequence belongs to the protein-tyrosine phosphatase family. Non-receptor class dual specificity subfamily.

The protein localises to the cytoplasm. It localises to the nucleus. It carries out the reaction O-phospho-L-tyrosyl-[protein] + H2O = L-tyrosyl-[protein] + phosphate. The catalysed reaction is O-phospho-L-seryl-[protein] + H2O = L-seryl-[protein] + phosphate. It catalyses the reaction O-phospho-L-threonyl-[protein] + H2O = L-threonyl-[protein] + phosphate. Its function is as follows. Dual specificity phosphatase able to dephosphorylate phosphotyrosine, phosphoserine and phosphothreonine residues within the same substrate, with a preference for phosphotyrosine as a substrate. Involved in the modulation of AMPK and MAPK1/2 signaling pathways. The chain is Dual specificity phosphatase 29 (dusp29) from Xenopus tropicalis (Western clawed frog).